A 505-amino-acid polypeptide reads, in one-letter code: Maturase K (505 aa).

This sequence belongs to the intron maturase 2 family. MatK subfamily.

It localises to the plastid. The protein resides in the chloroplast. In terms of biological role, usually encoded in the trnK tRNA gene intron. Probably assists in splicing its own and other chloroplast group II introns. This is Maturase K from Beta vulgaris (Sugar beet).